The chain runs to 513 residues: Cytochrome P450 705A1 (513 aa).

A helical transmembrane segment spans residues Q9 to F29. Position 448 (C448) interacts with heme.

It belongs to the cytochrome P450 family. Heme serves as cofactor. As to expression, expressed in root stele, root cortex, root epidermis, root pericycle of the root hair zone, and quiescent center at the root meristematic zone.

It is found in the membrane. In terms of biological role, cleaves the arabidiol side chain at C15 to form 14-apo-arabidiol and a side-chain fragment. Involved in the biosynthesis of the volatile homoterpene (E)-4,8-dimethyl-1,3,7-nonatriene (DMNT) in roots. Involved in the production of DMNT by degrading the triterpene arabidiol. May be involved in the defense again the fungal root pathogen Pythium irregulare by producing DMNT. This chain is Cytochrome P450 705A1, found in Arabidopsis thaliana (Mouse-ear cress).